The sequence spans 491 residues: GTPase Der (491 aa).

Positions 3 to 166 constitute an EngA-type G 1 domain; the sequence is PVIALVGRPN…AALGIFPRDD (164 aa). GTP is bound by residues 9–16, 56–60, and 118–121; these read GRPNVGKS, DTGGI, and NKVD. The interval 164 to 191 is disordered; sequence RDDEGEEGEGEAEVVAEGEEPKRVPGPS. Residues 166 to 181 show a composition bias toward acidic residues; sequence DEGEEGEGEAEVVAEG. The span at 182–191 shows a compositional bias: basic and acidic residues; it reads EEPKRVPGPS. Residues 196 to 369 enclose the EngA-type G 2 domain; the sequence is IKIAIIGRPN…SVQAAFQSAV (174 aa). Residues 202-209, 249-253, and 314-317 each bind GTP; these read GRPNVGKS, DTAGV, and NKWD. One can recognise a KH-like domain in the interval 370–454; the sequence is TRWPTSRLTR…PIRIEYKGGD (85 aa). The span at 452–464 shows a compositional bias: basic and acidic residues; that stretch reads GGDNPYEGKKNSL. The segment at 452–491 is disordered; the sequence is GGDNPYEGKKNSLTERQVNKKRRLMSHHKKAEKKRRDKKR. Basic residues predominate over residues 470–491; the sequence is NKKRRLMSHHKKAEKKRRDKKR.

It belongs to the TRAFAC class TrmE-Era-EngA-EngB-Septin-like GTPase superfamily. EngA (Der) GTPase family. In terms of assembly, associates with the 50S ribosomal subunit.

In terms of biological role, GTPase that plays an essential role in the late steps of ribosome biogenesis. This chain is GTPase Der, found in Azotobacter vinelandii (strain DJ / ATCC BAA-1303).